A 329-amino-acid chain; its full sequence is CDP-diacylglycerol--glycerol-3-phosphate 3-phosphatidyltransferase 1, chloroplastic (329 aa).

Residues 1 to 38 constitute a chloroplast transit peptide; it reads MAFLKTLNPLLRRSPTPIPNPRSLLSLDAFLAASSPTA. A run of 4 helical transmembrane segments spans residues 150-170, 190-210, 217-237, and 300-320; these read PVIG…TLAL, VFGS…VAIA, LHPG…GGAV, and ITVL…GYGI.

This sequence belongs to the CDP-alcohol phosphatidyltransferase class-I family. The cofactor is Mn(2+).

The protein resides in the plastid. It is found in the chloroplast membrane. The enzyme catalyses a CDP-1,2-diacyl-sn-glycerol + sn-glycerol 3-phosphate = a 1,2-diacyl-sn-glycero-3-phospho-(1'-sn-glycero-3'-phosphate) + CMP + H(+). Its pathway is phospholipid metabolism; phosphatidylglycerol biosynthesis; phosphatidylglycerol from CDP-diacylglycerol: step 1/2. Catalyzes the committed step to the synthesis of the acidic phospholipids. Transfers specifically a phosphatidyl group from CDP-diacylglycerol to glycerol-3-phosphate to form phosphatidylglycerophosphate. In Oryza sativa subsp. japonica (Rice), this protein is CDP-diacylglycerol--glycerol-3-phosphate 3-phosphatidyltransferase 1, chloroplastic.